The primary structure comprises 105 residues: ATP-dependent Clp protease adapter protein ClpS (105 aa).

Belongs to the ClpS family. Binds to the N-terminal domain of the chaperone ClpA.

Functionally, involved in the modulation of the specificity of the ClpAP-mediated ATP-dependent protein degradation. The polypeptide is ATP-dependent Clp protease adapter protein ClpS (Aeromonas salmonicida (strain A449)).